We begin with the raw amino-acid sequence, 295 residues long: N-acetylmuramic acid 6-phosphate etherase (295 aa).

The SIS domain occupies 54 to 217; sequence VIAAFRRGGR…STASMVGIGK (164 aa). E82 acts as the Proton donor in catalysis. Residue E113 is part of the active site.

It belongs to the GCKR-like family. MurNAc-6-P etherase subfamily. As to quaternary structure, homodimer.

The catalysed reaction is N-acetyl-D-muramate 6-phosphate + H2O = N-acetyl-D-glucosamine 6-phosphate + (R)-lactate. The protein operates within amino-sugar metabolism; N-acetylmuramate degradation. Functionally, specifically catalyzes the cleavage of the D-lactyl ether substituent of MurNAc 6-phosphate, producing GlcNAc 6-phosphate and D-lactate. In Geobacillus thermodenitrificans (strain NG80-2), this protein is N-acetylmuramic acid 6-phosphate etherase.